The sequence spans 607 residues: Major facilitator superfamily multidrug transporter mdrA (607 aa).

The next 12 helical transmembrane spans lie at Met77 to Val97, Val110 to Ala130, Gln139 to Ala159, Phe170 to Met190, Leu202 to Gly222, Trp229 to Val249, Pro305 to Phe325, Val342 to Val362, Leu385 to Thr405, Ile413 to Ile433, Ile443 to Phe463, and Trp478 to Tyr498. Positions Glu523–Arg583 are disordered. The span at Asp553–Leu564 shows a compositional bias: acidic residues. Residues Ser572–Arg583 show a composition bias toward low complexity.

It belongs to the major facilitator superfamily. DHA1 family. Polyamines/proton antiporter (TC 2.A.1.2.16) subfamily.

It localises to the cell membrane. Functionally, MFS transporter involved in the basal level of azole susceptibility. Confers resistance to voriconazole and, to a lesser extent, to fluconazole. The sequence is that of Major facilitator superfamily multidrug transporter mdrA from Aspergillus fumigatus (strain ATCC MYA-4609 / CBS 101355 / FGSC A1100 / Af293) (Neosartorya fumigata).